Reading from the N-terminus, the 1402-residue chain is DNA-directed RNA polymerase subunit beta' (1402 aa).

Zn(2+)-binding residues include cysteine 71, cysteine 73, cysteine 86, and cysteine 89. Aspartate 462, aspartate 464, and aspartate 466 together coordinate Mg(2+). Positions 808, 881, 888, and 891 each coordinate Zn(2+).

It belongs to the RNA polymerase beta' chain family. The RNAP catalytic core consists of 2 alpha, 1 beta, 1 beta' and 1 omega subunit. When a sigma factor is associated with the core the holoenzyme is formed, which can initiate transcription. The cofactor is Mg(2+). Requires Zn(2+) as cofactor.

The catalysed reaction is RNA(n) + a ribonucleoside 5'-triphosphate = RNA(n+1) + diphosphate. Functionally, DNA-dependent RNA polymerase catalyzes the transcription of DNA into RNA using the four ribonucleoside triphosphates as substrates. This Hyphomonas neptunium (strain ATCC 15444) protein is DNA-directed RNA polymerase subunit beta'.